The following is a 168-amino-acid chain: Small ribosomal subunit protein uS5c (168 aa).

An S5 DRBM domain is found at tryptophan 17–phenylalanine 80.

This sequence belongs to the universal ribosomal protein uS5 family. As to quaternary structure, part of the 30S ribosomal subunit. Contacts protein S4.

It localises to the plastid. Its subcellular location is the chloroplast. Functionally, with S4 and S12 plays an important role in translational accuracy. The sequence is that of Small ribosomal subunit protein uS5c (rps5) from Cyanidium caldarium (Red alga).